Consider the following 358-residue polypeptide: DNA replication and repair protein RecF (358 aa).

ATP is bound at residue 30–37 (GNNGSGKT).

Belongs to the RecF family.

It localises to the cytoplasm. Its function is as follows. The RecF protein is involved in DNA metabolism; it is required for DNA replication and normal SOS inducibility. RecF binds preferentially to single-stranded, linear DNA. It also seems to bind ATP. This is DNA replication and repair protein RecF from Histophilus somni (strain 2336) (Haemophilus somnus).